The primary structure comprises 592 residues: A-type ATP synthase subunit A (592 aa).

Position 233-240 (233-240 (GPFGSGKT)) interacts with ATP.

It belongs to the ATPase alpha/beta chains family. As to quaternary structure, has multiple subunits with at least A(3), B(3), C, D, E, F, H, I and proteolipid K(x).

The protein localises to the cell membrane. It carries out the reaction ATP + H2O + 4 H(+)(in) = ADP + phosphate + 5 H(+)(out). Component of the A-type ATP synthase that produces ATP from ADP in the presence of a proton gradient across the membrane. The A chain is the catalytic subunit. The chain is A-type ATP synthase subunit A from Saccharolobus islandicus (strain Y.G.57.14 / Yellowstone #1) (Sulfolobus islandicus).